The primary structure comprises 388 residues: Lipid-A-disaccharide synthase (388 aa).

This sequence belongs to the LpxB family.

It catalyses the reaction a lipid X + a UDP-2-N,3-O-bis[(3R)-3-hydroxyacyl]-alpha-D-glucosamine = a lipid A disaccharide + UDP + H(+). It functions in the pathway bacterial outer membrane biogenesis; LPS lipid A biosynthesis. In terms of biological role, condensation of UDP-2,3-diacylglucosamine and 2,3-diacylglucosamine-1-phosphate to form lipid A disaccharide, a precursor of lipid A, a phosphorylated glycolipid that anchors the lipopolysaccharide to the outer membrane of the cell. In Saccharophagus degradans (strain 2-40 / ATCC 43961 / DSM 17024), this protein is Lipid-A-disaccharide synthase.